The sequence spans 226 residues: Ribonuclease 3 (226 aa).

The RNase III domain occupies 6-128; that stretch reads INKLQRKLGY…LIGGVFLDSD (123 aa). Position 41 (E41) interacts with Mg(2+). D45 is an active-site residue. 2 residues coordinate Mg(2+): D114 and E117. Residue E117 is part of the active site. Positions 155–225 constitute a DRBM domain; that stretch reads DPKTRLQEFL…AEQALIKLGI (71 aa).

Belongs to the ribonuclease III family. In terms of assembly, homodimer. It depends on Mg(2+) as a cofactor.

The protein localises to the cytoplasm. The catalysed reaction is Endonucleolytic cleavage to 5'-phosphomonoester.. Its function is as follows. Digests double-stranded RNA. Involved in the processing of primary rRNA transcript to yield the immediate precursors to the large and small rRNAs (23S and 16S). Processes some mRNAs, and tRNAs when they are encoded in the rRNA operon. Processes pre-crRNA and tracrRNA of type II CRISPR loci if present in the organism. In Erwinia tasmaniensis (strain DSM 17950 / CFBP 7177 / CIP 109463 / NCPPB 4357 / Et1/99), this protein is Ribonuclease 3.